The primary structure comprises 1187 residues: AT-rich interactive domain-containing protein 5B (1187 aa).

Lys-130 participates in a covalent cross-link: Glycyl lysine isopeptide (Lys-Gly) (interchain with G-Cter in SUMO2). The interval 251-279 (RPRKKKPCPQRRDSFSGVKDSNNNSDGKA) is disordered. Ser-264 carries the phosphoserine modification. The ARID domain occupies 319–411 (RADEQAFLVA…LILPYERFIK (93 aa)). Lys-337 is subject to N6,N6-dimethyllysine. The segment at 413–611 (EEDKPLPPIK…QPPLASQSEL (199 aa)) is disordered. A Glycyl lysine isopeptide (Lys-Gly) (interchain with G-Cter in SUMO2) cross-link involves residue Lys-446. Over residues 447–459 (HEIPKSKKEKENA) the composition is skewed to basic and acidic residues. Over residues 460–469 (PKPQESPEVS) the composition is skewed to low complexity. Glycyl lysine isopeptide (Lys-Gly) (interchain with G-Cter in SUMO2) cross-links involve residues Lys-494 and Lys-496. Residues 512 to 522 (ADPEKDSDADR) are compositionally biased toward basic and acidic residues. Residues 527–537 (ATAAEEAGEQG) show a composition bias toward low complexity. Residues Lys-767, Lys-774, Lys-803, Lys-810, Lys-893, Lys-916, Lys-920, Lys-935, Lys-988, Lys-1000, and Lys-1013 each participate in a glycyl lysine isopeptide (Lys-Gly) (interchain with G-Cter in SUMO2) cross-link. Residues 891-977 (DKKPAPAEAP…YPEPLSRASR (87 aa)) are disordered. The residue at position 1032 (Ser-1032) is a Phosphoserine. The interval 1032–1065 (SPLDPPKEACGKDKGAELEGEGGKAAAAHGGPAA) is disordered. Over residues 1036 to 1048 (PPKEACGKDKGAE) the composition is skewed to basic and acidic residues. Residues Lys-1055 and Lys-1069 each participate in a glycyl lysine isopeptide (Lys-Gly) (interchain with G-Cter in SUMO2) cross-link. Residues 1055 to 1065 (KAAAAHGGPAA) are compositionally biased toward low complexity. Ser-1132 is modified (phosphoserine).

It belongs to the ARID5B family. Methylation at Lys-337 prevents DNA-binding. Demethylation by PHF2 promotes recruitment of the PHF2-ARID5B complex to promoters.

The protein localises to the nucleus. Functionally, transcription coactivator that binds to the 5'-AATA[CT]-3' core sequence and plays a key role in adipogenesis and liver development. Acts by forming a complex with phosphorylated PHF2, which mediates demethylation at Lys-337, leading to target the PHF2-ARID5B complex to target promoters, where PHF2 mediates demethylation of dimethylated 'Lys-9' of histone H3 (H3K9me2), followed by transcription activation of target genes. The PHF2-ARID5B complex acts as a coactivator of HNF4A in liver. Required for adipogenesis: regulates triglyceride metabolism in adipocytes by regulating expression of adipogenic genes. Overexpression leads to induction of smooth muscle marker genes, suggesting that it may also act as a regulator of smooth muscle cell differentiation and proliferation. This chain is AT-rich interactive domain-containing protein 5B (ARID5B), found in Canis lupus familiaris (Dog).